Consider the following 87-residue polypeptide: Candoxin (87 aa).

Residues 1–21 (MKTLLLTLVVVTIVCLDLGYT) form the signal peptide. 5 disulfides stabilise this stretch: Cys-24-Cys-47, Cys-27-Cys-32, Cys-40-Cys-64, Cys-68-Cys-80, and Cys-81-Cys-86.

In terms of tissue distribution, expressed by the venom gland.

Its subcellular location is the secreted. Binds and inhibits muscular and neuronal nicotinic acetylcholine receptors (nAChR). Is a reversible antagonist of muscle nAChR (alpha-1-beta-1-delta-epsilon/CHRNA1-CHRNB1-CHRND-CHRNE) (IC(50)=10 nM) and a potent and poorly reversible antagonist of the neuronal alpha-7/CHRNA7 nAChR (IC(50)=50 nM). May exhibit differential affinities for the two binding sites on the muscle nAChR. The polypeptide is Candoxin (Bungarus candidus (Malayan krait)).